The following is a 237-amino-acid chain: Orotidine 5'-phosphate decarboxylase (237 aa).

Substrate-binding positions include D10, K33, D60–T69, T124, R186, Q195, G215, and R216. The active-site Proton donor is K62.

The protein belongs to the OMP decarboxylase family. Type 1 subfamily. As to quaternary structure, homodimer.

The catalysed reaction is orotidine 5'-phosphate + H(+) = UMP + CO2. Its pathway is pyrimidine metabolism; UMP biosynthesis via de novo pathway; UMP from orotate: step 2/2. Functionally, catalyzes the decarboxylation of orotidine 5'-monophosphate (OMP) to uridine 5'-monophosphate (UMP). In Lactiplantibacillus plantarum (strain ATCC BAA-793 / NCIMB 8826 / WCFS1) (Lactobacillus plantarum), this protein is Orotidine 5'-phosphate decarboxylase.